A 95-amino-acid chain; its full sequence is Cell division protein FtsB (95 aa).

At 1 to 3 (MKW) the chain is on the cytoplasmic side. A helical membrane pass occupies residues 4–21 (VTGLLVVLLLGLQYKLWI). Topologically, residues 22–95 (GEGSVAEVWQ…QVVGRPGETP (74 aa)) are periplasmic. The stretch at 26-73 (VAEVWQLRQTLEAQRAENEELRYRNAALDAEVTDLKTGLDAIEERARR) forms a coiled coil.

The protein belongs to the FtsB family. In terms of assembly, part of a complex composed of FtsB, FtsL and FtsQ.

It is found in the cell inner membrane. Its function is as follows. Essential cell division protein. May link together the upstream cell division proteins, which are predominantly cytoplasmic, with the downstream cell division proteins, which are predominantly periplasmic. This chain is Cell division protein FtsB, found in Thioalkalivibrio sulfidiphilus (strain HL-EbGR7).